The primary structure comprises 2118 residues: MSSSRGSLRALLLAAAAAAAAAAGAVSNKLGYWFSCRRFGLDCPEQLEWRHWNPGTEYVKQLVLKNVSTSVLKIRFKQPTSKAFGMDFPEPFKLRPGMSQPLKVVFRPLKQQHYSDNVELFVGNVSCLVPVHAYTPVTHIEVPPALDFGFTPTKETVTAQLPVRNTGDVRVDVLWKLDAPFSISPLFASLAPGEVVAFTASFTPPEACSYTASAACQLESGAAAICKISGIGKFPYLSVEQAGVDFGAVVVGQRVERLVRFGNHSVVPAHFAVTHDEAGPDDGVFTVGPARGTLGPEEYSMLKLSYTPRATGTFSSETFHIGTAGGNRVALNLRGTAVAPLVTLSTRAFNFGNVAAGATASRVLYIRNHSAVPVPYDFQVDPLDVFAISRTRGVLAPDSTAHVTITFRPMAGLAANLWRRVTLLLKDAEPQGVDLVATAYTDKSRPPPLSQRHVERYMARVLSGGPAVEESQLDSKPPSAATGDPAAALTVDSDALDFGSCSRLSASEYRSVTVTNHTPAKLTAFVLVPEWADPGAAPGDAPQRVFQVFPESADMRPYGQATFKVAFRPPRDAAFFSQQLALVAHTKSQRNFRLVAEHQVLPAWCVPLRATGNTFLHSNPEFGPKVELSSRAVAFPPCRPGERVHQTLLIANSGDTPVAFSFGAAGAALGPLFSAKPAAGVVPPQGHVLVALRFAPTDTRPAAANALVTFNGVASNAVSVSLRGAAHTPRLTTDLPSSTLYFRPTCVGASSQRAVTLHNPSRVPVAFRWRLPARLQGLVTVSPAAGALRGNESVQLQWSFTPAAQKLYEARAACLVMSPPEAANGNAAGATASAASLFPGAGLATGIEWYEGAGATAALAGMGEEEAADAVLLSLVGEGTQGAVALEPPSLELGDLRVGHPVRRPLLLQNCSDGVLRYSLEVGPAEDDQPPAGDATLVDFTAGLDSAAEGGVGGGAGGAGGAALECWVDEPEGALPARASKTVMVTLFPRYRKRYSLQVRCRSSTVAPLLTGPNRPPSGGAGPRPLDAGSEAAAAAAAAAAAAAAPLPPPVIAPLTASTTFPTLEVTDVYCEGLPKQLLWQLLGLNDLNHHLRTEVTATELRLRAAQDRGALTTEAASAAMRPFLMEFGTHGLGGRPRVVHVEISNPTPLPASWQLHSFDDPDGVELENWVEPGRPRTEGERMRDLIAEYKLFEMRPRSGELEPGARCTVTIEFRPSVEGSFELPVFLHITDGKRLRLQLQAVTTPEPLQLLALPPPLRTFRLEPVALGERAPPLQMYVLRNGGPAPLHWRLDTAPLAALAEASWGHPVLELVGPEEGDIEEGGVAAINWRFSPLEAKEYRVEVPVLLGDGGIEVIELLGRGFAPPPAPPHGAAAVQLIGPGAATSPAAPTTAAEDDDTPAAALDSVGGDAEAEAARAAAAADRDWITWRGLSSAPSAGMAGRLALVDHDLVSLGVTPVRGLTRRIIVLTNKSRYPLAFDWDLGCLAPPPPPGLAATQRAAAASAMMGLGGGSLLPASQLQLLAGRPLQGALAISPAAGSLEPGERLVCRVSLHAGVTPQVFEGEVRCHVRIDDDAVAEAEAAAAAAAAAGAAAVAAELPFVEQVEEVIAEAPVRGPPAPPPAVAAAQRASRLRSRLPVHQYMTTAVRTRIEPLNAAFTATMEARTRRLADATRPPSWPEPQSISVTLRGRILDERQLGALRYVPPHERAAARAAVVAGAAWVPPAMVPFWEEEGRSTPAVSAQPSSQGGGGYGVGGYGGGYGSGGSQGGEASVAPSGGDPGGYSPRGGMADSWPSLEPGLGMEETVVGPPTVGLDLSLSLQHAGGAGGAPGGDGDSDSRPGTPSMTAAAHHHHHHPRHAGPAPGSGTAEVMEVTFSGDQQPTGGPMPSPPSISGAPDPDSATPDDDFATSDAAVNAAAAVRAAGGGMGSPQPVDPGGSAAAAASELAPPALPPAPPRGGDIEYDALVSAREVLAGLFAELMEDADVVRAVAFLPEHEVPSFAEVRATPPPCYDPAVRAAAEAARAEAEARAAAEAATKAAAEAEAGAAFAIPAAAAQAATEPPALEDELAADTELARVLVAPEWRAFADFVLESAVLGLMQESAAGDWEMPEEEVGR.

The chain crosses the membrane as a helical span at residues 6–26 (GSLRALLLAAAAAAAAAAGAV). The 122-residue stretch at 615-736 (FLHSNPEFGP…HTPRLTTDLP (122 aa)) folds into the MSP domain. 3 disordered regions span residues 1007–1029 (APLL…LDAG), 1764–1909 (SGGS…DDFA), and 1924–1958 (AGGG…APPR). The span at 1825–1834 (GGAGGAPGGD) shows a compositional bias: gly residues. Low complexity predominate over residues 1840–1849 (RPGTPSMTAA). Over residues 1850–1859 (AHHHHHHPRH) the composition is skewed to basic residues. Composition is skewed to low complexity over residues 1892 to 1902 (SISGAPDPDSA) and 1936 to 1949 (PGGS…ELAP). A coiled-coil region spans residues 2016 to 2045 (AVRAAAEAARAEAEARAAAEAATKAAAEAE).

Belongs to the CFAP65 family.

The protein localises to the cell projection. It localises to the cilium. It is found in the flagellum membrane. The protein resides in the cytoplasm. Its function is as follows. May play a role in flagellar formation and mobility. The polypeptide is Cilia- and flagella-associated protein 65 (Chlamydomonas reinhardtii (Chlamydomonas smithii)).